Here is a 241-residue protein sequence, read N- to C-terminus: Transforming protein p29 (241 aa).

The interval 1-41 is disordered; sequence MPAARAAPAADEPMRDPVAPVRAPALPRPAPGAVAPASGGA. S-palmitoyl cysteine; by host attachment occurs at residues C233 and C236. C238 carries the cysteine methyl ester; by host modification. The S-farnesyl cysteine; by host moiety is linked to residue C238. Residues 239-241 constitute a propeptide, removed in mature form; it reads VLS.

The protein belongs to the small GTPase superfamily. Ras family.

It is found in the host cell membrane. The catalysed reaction is GTP + H2O = GDP + phosphate + H(+). With respect to regulation, alternates between an inactive form bound to GDP and an active form bound to GTP. Activated by a guanine nucleotide-exchange factor (GEF) and inactivated by a GTPase-activating protein (GAP). This chain is Transforming protein p29 (H-RAS), found in Mus musculus (Mouse).